We begin with the raw amino-acid sequence, 284 residues long: Probable endonuclease 4 (284 aa).

Residues H69, H113, E148, D182, H185, H217, D230, H232, and E262 each coordinate Zn(2+).

The protein belongs to the AP endonuclease 2 family. The cofactor is Zn(2+).

It carries out the reaction Endonucleolytic cleavage to 5'-phosphooligonucleotide end-products.. Functionally, endonuclease IV plays a role in DNA repair. It cleaves phosphodiester bonds at apurinic or apyrimidinic (AP) sites, generating a 3'-hydroxyl group and a 5'-terminal sugar phosphate. This Bifidobacterium longum subsp. infantis (strain ATCC 15697 / DSM 20088 / JCM 1222 / NCTC 11817 / S12) protein is Probable endonuclease 4.